We begin with the raw amino-acid sequence, 512 residues long: N-fatty-acyl-amino acid synthase/hydrolase PM20D1 (512 aa).

An N-terminal signal peptide occupies residues 1–34 (MAVSRWKAVGSTLLAAFLVGLVVLIAVLLIRTYT). N-linked (GlcNAc...) asparagine glycans are attached at residues asparagine 45 and asparagine 81. A Zn(2+)-binding site is contributed by histidine 134. The active site involves aspartate 136. Aspartate 166 lines the Zn(2+) pocket. The active-site Proton acceptor is the glutamate 200. Positions 201 and 227 each coordinate Zn(2+). N-linked (GlcNAc...) asparagine glycosylation occurs at asparagine 450. Histidine 472 serves as a coordination point for Zn(2+).

The protein belongs to the peptidase M20A family.

Its subcellular location is the secreted. It carries out the reaction an N-acyl-L-amino acid + H2O = an L-alpha-amino acid + a carboxylate. The enzyme catalyses an N-acyl-aromatic L-alpha-amino acid + H2O = an aromatic L-alpha-amino acid + a carboxylate. It catalyses the reaction N-(5Z,8Z,11Z,14Z)-eicosatetraenoyl-glycine + H2O = (5Z,8Z,11Z,14Z)-eicosatetraenoate + glycine. The catalysed reaction is N-hexadecanoyl-L-phenylalanine + H2O = hexadecanoate + L-phenylalanine. It carries out the reaction N-octadecanoyl-L-phenylalanine + H2O = octadecanoate + L-phenylalanine. The enzyme catalyses N-(4Z,7Z,10Z,13Z,16Z,19Z-docosahexaenoyl)-L-phenylalanine + H2O = (4Z,7Z,10Z,13Z,16Z,19Z)-docosahexaenoate + L-phenylalanine. It catalyses the reaction N-(9Z-octadecenoyl)-L-asparagine + H2O = L-asparagine + (9Z)-octadecenoate. The catalysed reaction is (9Z)-octadecenoate + glycine = N-(9Z-octadecenoyl)glycine + H2O. It carries out the reaction N-(9Z-octadecenoyl)-L-lysine + H2O = L-lysine + (9Z)-octadecenoate. The enzyme catalyses N-(9Z-octadecenoyl)-L-methionine + H2O = (9Z)-octadecenoate + L-methionine. It catalyses the reaction N-(9Z-octadecenoyl)-L-serine + H2O = L-serine + (9Z)-octadecenoate. The catalysed reaction is N-(9Z-octadecenoyl)-L-tryptophan + H2O = L-tryptophan + (9Z)-octadecenoate. It carries out the reaction N-(9Z-octadecenoyl)-L-tyrosine + H2O = L-tyrosine + (9Z)-octadecenoate. The enzyme catalyses N-(9Z-octadecenoyl)-L-glutamine + H2O = L-glutamine + (9Z)-octadecenoate. It catalyses the reaction N-(5Z,8Z,11Z,14Z-eicosatetraenoyl)-L-serine + H2O = (5Z,8Z,11Z,14Z)-eicosatetraenoate + L-serine. The catalysed reaction is (5Z,8Z,11Z,14Z)-eicosatetraenoate + L-phenylalanine = N-(5Z,8Z,11Z,14Z-eicosatetraenoyl)-L-phenylalanine + H2O. It carries out the reaction N-(9Z-octadecenoyl)-L-leucine + H2O = L-leucine + (9Z)-octadecenoate. The enzyme catalyses L-phenylalanine + (9Z)-octadecenoate = N-(9Z-octadecenoyl)-L-phenylalanine + H2O. It functions in the pathway amino-acid metabolism. Its pathway is energy metabolism; electron transfer. It participates in lipid metabolism; fatty acid metabolism. Its activity is regulated as follows. Lipoproteins are powerful coactivators of PM20D1 activity in vitro and NAA biosynthesis in vivo. Secreted enzyme that regulates the endogenous N-fatty acyl amino acid (NAAs) tissue and circulating levels by functioning as a bidirectional NAA synthase/hydrolase. It condenses free fatty acids and free amino acids to generate NAAs and bidirectionally catalyzes the reverse hydrolysis reaction. Some of these NAAs stimulate oxidative metabolism via mitochondrial uncoupling, increasing energy expenditure in a UPC1-independent manner. Thereby, this secreted protein may indirectly regulate whole body energy expenditure. PM20D1 circulates in tight association with both low- and high-density (LDL and HDL,respectively) lipoprotein particles. The polypeptide is N-fatty-acyl-amino acid synthase/hydrolase PM20D1 (Xenopus tropicalis (Western clawed frog)).